The following is a 301-amino-acid chain: GTP cyclohydrolase FolE2 (301 aa).

This sequence belongs to the GTP cyclohydrolase IV family.

It carries out the reaction GTP + H2O = 7,8-dihydroneopterin 3'-triphosphate + formate + H(+). The protein operates within cofactor biosynthesis; 7,8-dihydroneopterin triphosphate biosynthesis; 7,8-dihydroneopterin triphosphate from GTP: step 1/1. Converts GTP to 7,8-dihydroneopterin triphosphate. This chain is GTP cyclohydrolase FolE2, found in Pseudomonas syringae pv. syringae (strain B728a).